The chain runs to 158 residues: 2-C-methyl-D-erythritol 2,4-cyclodiphosphate synthase (158 aa).

A divalent metal cation-binding residues include D9 and H11. Residues 9 to 11 (DAH) and 35 to 36 (HS) contribute to the 4-CDP-2-C-methyl-D-erythritol 2-phosphate site. Position 43 (H43) interacts with a divalent metal cation. 4-CDP-2-C-methyl-D-erythritol 2-phosphate contacts are provided by residues 57-59 (DIG), 62-66 (FPDTD), 133-136 (TTTE), F140, and R143.

It belongs to the IspF family. In terms of assembly, homotrimer. Requires a divalent metal cation as cofactor.

It carries out the reaction 4-CDP-2-C-methyl-D-erythritol 2-phosphate = 2-C-methyl-D-erythritol 2,4-cyclic diphosphate + CMP. It functions in the pathway isoprenoid biosynthesis; isopentenyl diphosphate biosynthesis via DXP pathway; isopentenyl diphosphate from 1-deoxy-D-xylulose 5-phosphate: step 4/6. Its function is as follows. Involved in the biosynthesis of isopentenyl diphosphate (IPP) and dimethylallyl diphosphate (DMAPP), two major building blocks of isoprenoid compounds. Catalyzes the conversion of 4-diphosphocytidyl-2-C-methyl-D-erythritol 2-phosphate (CDP-ME2P) to 2-C-methyl-D-erythritol 2,4-cyclodiphosphate (ME-CPP) with a corresponding release of cytidine 5-monophosphate (CMP). This is 2-C-methyl-D-erythritol 2,4-cyclodiphosphate synthase from Methylococcus capsulatus (strain ATCC 33009 / NCIMB 11132 / Bath).